Consider the following 415-residue polypeptide: Serine hydroxymethyltransferase 1 (415 aa).

(6S)-5,6,7,8-tetrahydrofolate is bound by residues Leu-117 and 121 to 123; that span reads GHL. Residue Lys-225 is modified to N6-(pyridoxal phosphate)lysine. 349–351 serves as a coordination point for (6S)-5,6,7,8-tetrahydrofolate; that stretch reads SPF.

It belongs to the SHMT family. Homodimer. Pyridoxal 5'-phosphate serves as cofactor.

It is found in the cytoplasm. It carries out the reaction (6R)-5,10-methylene-5,6,7,8-tetrahydrofolate + glycine + H2O = (6S)-5,6,7,8-tetrahydrofolate + L-serine. The protein operates within one-carbon metabolism; tetrahydrofolate interconversion. Its pathway is amino-acid biosynthesis; glycine biosynthesis; glycine from L-serine: step 1/1. Its function is as follows. Catalyzes the reversible interconversion of serine and glycine with tetrahydrofolate (THF) serving as the one-carbon carrier. This reaction serves as the major source of one-carbon groups required for the biosynthesis of purines, thymidylate, methionine, and other important biomolecules. Also exhibits THF-independent aldolase activity toward beta-hydroxyamino acids, producing glycine and aldehydes, via a retro-aldol mechanism. The sequence is that of Serine hydroxymethyltransferase 1 from Sulfurimonas denitrificans (strain ATCC 33889 / DSM 1251) (Thiomicrospira denitrificans (strain ATCC 33889 / DSM 1251)).